The primary structure comprises 298 residues: MSSQRLRIAIQKKGRLSKECQELFKRCGMKFNISGERLVVHSENMPIDLLLVRDDDIPSLIMDGVVDLGVIGENELEEVRLERKALGEPSAFTTLRRLDFGGCRLSIAIDKDEVYNGPQDLAGKRIATTYPQLLKSFMDEQGIPFSTCILNGSVEVAPRAGLADAIADLVSTGATLEANGLKEAEVIFRSKATLIQREGEFDADKAALINKLLTRMQGCIQAKESKYIMLHAPTDKLDAIKDLLPGAEDPTVLPLSRDGAKVAVHLVSTENLFWETMEQLKALGASSILVLPIEKMME.

This sequence belongs to the ATP phosphoribosyltransferase family. Long subfamily. Mg(2+) is required as a cofactor.

Its subcellular location is the cytoplasm. It carries out the reaction 1-(5-phospho-beta-D-ribosyl)-ATP + diphosphate = 5-phospho-alpha-D-ribose 1-diphosphate + ATP. It participates in amino-acid biosynthesis; L-histidine biosynthesis; L-histidine from 5-phospho-alpha-D-ribose 1-diphosphate: step 1/9. Its activity is regulated as follows. Feedback inhibited by histidine. Its function is as follows. Catalyzes the condensation of ATP and 5-phosphoribose 1-diphosphate to form N'-(5'-phosphoribosyl)-ATP (PR-ATP). Has a crucial role in the pathway because the rate of histidine biosynthesis seems to be controlled primarily by regulation of HisG enzymatic activity. In Aliivibrio fischeri (strain ATCC 700601 / ES114) (Vibrio fischeri), this protein is ATP phosphoribosyltransferase.